Reading from the N-terminus, the 213-residue chain is Octanoyltransferase (213 aa).

The 176-residue stretch at 36–211 folds into the BPL/LPL catalytic domain; sequence TNTPDEIWLV…KFCQQLGFKL (176 aa). Residues 75 to 82, 142 to 144, and 155 to 157 each bind substrate; these read RGGQVTYH, SLG, and GLA. The active-site Acyl-thioester intermediate is the cysteine 173.

Belongs to the LipB family.

It is found in the cytoplasm. The catalysed reaction is octanoyl-[ACP] + L-lysyl-[protein] = N(6)-octanoyl-L-lysyl-[protein] + holo-[ACP] + H(+). It participates in protein modification; protein lipoylation via endogenous pathway; protein N(6)-(lipoyl)lysine from octanoyl-[acyl-carrier-protein]: step 1/2. Its function is as follows. Catalyzes the transfer of endogenously produced octanoic acid from octanoyl-acyl-carrier-protein onto the lipoyl domains of lipoate-dependent enzymes. Lipoyl-ACP can also act as a substrate although octanoyl-ACP is likely to be the physiological substrate. This chain is Octanoyltransferase, found in Photorhabdus laumondii subsp. laumondii (strain DSM 15139 / CIP 105565 / TT01) (Photorhabdus luminescens subsp. laumondii).